Consider the following 373-residue polypeptide: Enoyl-[acyl-carrier-protein] reductase, mitochondrial (373 aa).

The transit peptide at 1-53 directs the protein to the mitochondrion; it reads MWVCSTLWRVRTPARQWRGLLPASGCHGPAASSYSASAEPARVRALVYGHHGD. Lys-61 carries the N6-acetyllysine; alternate modification. Lys-61 carries the N6-succinyllysine; alternate modification. Tyr-94 serves as the catalytic Proton donor. NADP(+) contacts are provided by residues Asn-167, 193–196, and 216–218; these read NSGV and RDR. N6-acetyllysine; alternate is present on residues Lys-252 and Lys-267. 2 positions are modified to N6-succinyllysine; alternate: Lys-252 and Lys-267. NADP(+) contacts are provided by residues 285-288 and 310-312; these read YGGM and FWL. Residue Lys-316 is modified to N6-succinyllysine. Lys-368 serves as a coordination point for NADP(+).

Belongs to the zinc-containing alcohol dehydrogenase family. Quinone oxidoreductase subfamily. Homodimer. Isoform 2 interacts with PPARA in the nucleus and increases its activity. In terms of tissue distribution, highly expressed in skeletal and heart muscle. Expressed at lower level in placenta, liver, kidney and pancreas. Weakly or not expressed in lung.

It is found in the mitochondrion. Its subcellular location is the cytoplasm. The protein localises to the nucleus. It catalyses the reaction a 2,3-saturated acyl-[ACP] + NADP(+) = a (2E)-enoyl-[ACP] + NADPH + H(+). The catalysed reaction is (2E)-butenoyl-[ACP] + NADPH + H(+) = butanoyl-[ACP] + NADP(+). The enzyme catalyses (2E)-hexenoyl-[ACP] + NADPH + H(+) = hexanoyl-[ACP] + NADP(+). It carries out the reaction (2E)-octenoyl-[ACP] + NADPH + H(+) = octanoyl-[ACP] + NADP(+). It catalyses the reaction (2E)-decenoyl-[ACP] + NADPH + H(+) = decanoyl-[ACP] + NADP(+). The catalysed reaction is (2E)-dodecenoyl-[ACP] + NADPH + H(+) = dodecanoyl-[ACP] + NADP(+). The enzyme catalyses (2E)-tetradecenoyl-[ACP] + NADPH + H(+) = tetradecanoyl-[ACP] + NADP(+). It carries out the reaction (2E)-hexadecenoyl-[ACP] + NADPH + H(+) = hexadecanoyl-[ACP] + NADP(+). In terms of biological role, catalyzes the NADPH-dependent reduction of trans-2-enoyl thioesters in mitochondrial fatty acid synthesis (fatty acid synthesis type II). Fatty acid chain elongation in mitochondria uses acyl carrier protein (ACP) as an acyl group carrier, but the enzyme accepts both ACP and CoA thioesters as substrates in vitro. Displays a preference for medium-chain over short- and long-chain substrates. May provide the octanoyl chain used for lipoic acid biosynthesis, regulating protein lipoylation and mitochondrial respiratory activity particularly in Purkinje cells. Involved in iron homeostasis; affecting Fe-S cluster assembly and ceramide metabolism. Required for proper morphology and bioenergetic functions of mitochondria. Required for maintenance of neurons. This Homo sapiens (Human) protein is Enoyl-[acyl-carrier-protein] reductase, mitochondrial (MECR).